The sequence spans 557 residues: MDGIVPDIAVGTKRGSDELFSACVTNGPFIMSSNSASTANGNDSKKFKGDNRSAGVPSRVIHIRKLPSDVTEGEVISLGLPFGKVTNLLMLKGKNQAFIEMNTEEAANTMVNYYTSVTPVLRGQPIYIQFSNHKELKTDSSPNQARAQAALQAVNSVQSGNLALAASAAAVDAGMAMAGQSPVLRIIVENLFYPVTLDVLHQIFSKFGTVLKIITFTKNNQFQALLQYADPVSAQHAKLSLDGQNIYNACCTLRIDFSKLTSLNVKYNNDKSRDYTRPDLPSGDNQPSLDQTMAAAFGAPGIMSASPYAGAGFPPTFAIPQAAGLSVPNVHGALAPLAIPSAAAAAAAAGRIAIPGLAGAGNSVLLVSNLNPERVTPQSLFILFGVYGDVQRVKILFNKKENALVQMADGSQAQLAMSHLNGHKLHGKPVRITLSKHQNVQLPREGQEDQGLTKDYGNSPLHRFKKPGSKNFQNIFPPSATLHLSNIPPSISEEDLKILFSSNGGIVKGFKFFQKDRKMALIQMGSVEEAIQALIDLHNHDLGENHHLRVSFSKSTI.

N-acetylmethionine is present on M1. Residue S16 is modified to Phosphoserine. 3 RRM domains span residues 59–143 (RVIH…SSPN), 184–260 (LRII…FSKL), and 363–437 (SVLL…LSKH). K65 participates in a covalent cross-link: Glycyl lysine isopeptide (Lys-Gly) (interchain with G-Cter in SUMO2). Y127 is subject to Phosphotyrosine. A Phosphothreonine modification is found at T138. S141 carries the phosphoserine modification. A Glycyl lysine isopeptide (Lys-Gly) (interchain with G-Cter in SUMO2) cross-link involves residue K218. At S459 the chain carries Phosphoserine. The RRM 4 domain occupies 480-555 (ATLHLSNIPP…HHLRVSFSKS (76 aa)).

Monomer. Part of a ternary complex containing KHSRP, PTBP1, PTBP2 and HNRPH1. Interacts with RAVER1 and SFPQ.

It is found in the nucleus. Plays a role in pre-mRNA splicing and in the regulation of alternative splicing events. Activates exon skipping of its own pre-mRNA during muscle cell differentiation. Binds to the polypyrimidine tract of introns. May promote RNA looping when bound to two separate polypyrimidine tracts in the same pre-mRNA. May promote the binding of U2 snRNP to pre-mRNA. Cooperates with RAVER1 to modulate switching between mutually exclusive exons during maturation of the TPM1 pre-mRNA. Represses the splicing of MAPT/Tau exon 10. Binds to polypyrimidine-rich controlling element (PCE) of CFTR and promotes exon skipping of CFTR exon 9, thereby antagonizing TIA1 and its role in exon inclusion of CFTR exon 9. Plays a role in the splicing of pyruvate kinase PKM by binding repressively to a polypyrimidine tract flanking PKM exon 9, inhibiting exon 9 inclusion and resulting in exon 10 inclusion and production of the PKM M2 isoform. The polypeptide is Polypyrimidine tract-binding protein 1 (PTBP1) (Sus scrofa (Pig)).